We begin with the raw amino-acid sequence, 553 residues long: Zinc finger protein with KRAB and SCAN domains 3 (553 aa).

Residues glutamate 28–arginine 49 are disordered. Phosphoserine is present on residues serine 33 and serine 44. An SCAN box domain is found at arginine 51–leucine 133. Threonine 136 carries the post-translational modification Phosphothreonine. Lysine 176 participates in a covalent cross-link: Glycyl lysine isopeptide (Lys-Gly) (interchain with G-Cter in SUMO2). Position 206 is a phosphothreonine (threonine 206). The region spanning leucine 213–proline 273 is the KRAB domain. Residue serine 223 is modified to Phosphoserine. 5 C2H2-type zinc fingers span residues phenylalanine 313–histidine 335, tyrosine 341–histidine 363, tyrosine 369–histidine 391, tyrosine 397–histidine 419, and tyrosine 425–histidine 447. Position 448 is a phosphothreonine (threonine 448). C2H2-type zinc fingers lie at residues tyrosine 479–histidine 501 and phenylalanine 507–histidine 529.

Belongs to the krueppel C2H2-type zinc-finger protein family. In terms of tissue distribution, expressed in heart, brain, spleen, lung, liver, skeletal muscle, kidney and testis.

Its subcellular location is the nucleus. The protein resides in the cytoplasm. Its function is as follows. Transcriptional factor that binds to the consensus sequence 5'-[GT][AG][AGT]GGGG-3' and acts as a repressor of autophagy. Specifically represses expression of genes involved in autophagy and lysosome biogenesis/function such as MAP1LC3B, ULK1 or WIPI2. Associates with chromatin at the ITGB4 and VEGF promoters. This is Zinc finger protein with KRAB and SCAN domains 3 (Zkscan3) from Mus musculus (Mouse).